A 292-amino-acid chain; its full sequence is UPF0696 protein C11orf68 (292 aa).

Positions 1-11 are enriched in low complexity; that stretch reads MAAAAAAAVAG. Residues 1 to 60 are disordered; that stretch reads MAAAAAAAVAGVGRGGGGAEPRQERSRARGWAGVERSEGRRMEPGEELEEEGSPGGREDG. At Arg29 the chain carries Omega-N-methylarginine. A compositionally biased stretch (basic and acidic residues) spans 35 to 44; sequence ERSEGRRMEP.

This sequence belongs to the UPF0696 family.

The chain is UPF0696 protein C11orf68 (C11orf68) from Homo sapiens (Human).